Here is a 670-residue protein sequence, read N- to C-terminus: MTSERKMLVTSALPYANGHLHLGHLVEHIQTDIWVRTHKMLGIQCISVCGDDAHGTPIMLKAEQLGITPEALTAEIKLSHEKDFKAFAIDYDYYHTTHSPENQALATTIFERLQAGGDIVKKTIRQFYDPVKQMFLPDRYVKGTCPKCAAVDQYGDNCEVCGATYSPTDLINPVSVISGVSPVEKESEHYFFDLPRYEELLKDWTRKGHLQTEVTNKLSEWFEAGLKQWDISRDAPYFGFPIPGVPDKYFYVWLDAPIGYMASFKKYCDERGVSFDEFWDKASKTELYHFVGKDIVYFHALFWPAMLAASGFRTPTAVYTHGFLTVEGQKMSKSRGTFIEARAYLAHLHPEYLRYYFAAKLNGRVDDLDLNFDDFVNRVNADLVGKVVNIASRCAGFINKRFDNRLSSELNDQKLYNDLLSARESVIDAFVSRDYARAIRQIMDCADKVNQYIDANKPWVLAKDESKLNEVHAICTMGINLFRILITYLKPVLPMMAKASEEFLNSEPLHWDSIDKPLLNHRINTFKPLMVRVEKEKIEAMLVQSKESLMTTPVKENTPVEDANLISIEDFAKVDLRIAKIVNAEPVEGADKLMRLILDLGDAQKQVFAGIKKAYDAEELIGRLTVMVANLEPRTMRFGVSEGMVLAAGDGQGIYLLQPDAGALPGMKVK.

Residues 14-24 (PYANGHLHLGH) carry the 'HIGH' region motif. Zn(2+)-binding residues include Cys145, Cys148, Cys158, and Cys161. Positions 330–334 (KMSKS) match the 'KMSKS' region motif. ATP is bound at residue Lys333. A tRNA-binding domain is found at 570–670 (DFAKVDLRIA…AGALPGMKVK (101 aa)).

This sequence belongs to the class-I aminoacyl-tRNA synthetase family. MetG type 1 subfamily. In terms of assembly, homodimer. It depends on Zn(2+) as a cofactor.

It localises to the cytoplasm. The enzyme catalyses tRNA(Met) + L-methionine + ATP = L-methionyl-tRNA(Met) + AMP + diphosphate. Is required not only for elongation of protein synthesis but also for the initiation of all mRNA translation through initiator tRNA(fMet) aminoacylation. This is Methionine--tRNA ligase from Legionella pneumophila subsp. pneumophila (strain Philadelphia 1 / ATCC 33152 / DSM 7513).